The chain runs to 588 residues: Cyclomaltodextrinase (588 aa).

2 residues coordinate substrate: H247 and R326. Residue D328 is the Nucleophile of the active site. The Proton donor role is filled by E357. Residues 423-424 (HD), D468, and R472 contribute to the substrate site.

Belongs to the glycosyl hydrolase 13 family. In terms of assembly, exists as a monomer or a homodimer in solution. Homodimer is more active and stable than the monomer.

The catalysed reaction is cyclomaltodextrin + H2O = linear maltodextrin. No metal dependence, but Mn(2+) increases the activity with alpha-cyclodextrin as substrate. No effect on the activity with presence or absence of Ca(2+), Zn(2+), Tween-20 or EDTA. Functionally, hydrolyzes alpha-, beta- and gamma-cyclodextrins with the highest activity with alpha-cyclodextrin (cyclomaltohexaose). Pullulan is the preferred substrate from linear substrates. Maltose is a major product of these reactions. Is also able to hydrolyze maltotriose and acarbose, and transglycosylate their hydrolytic products. Major reaction products of maltotriose and of acarbose are maltose and glucose, and glucose and pseudotrisaccharide, respectively. No activity with glucose or maltose as substrate. The protein is Cyclomaltodextrinase of Geobacillus thermopakistaniensis (strain MAS1).